Here is a 586-residue protein sequence, read N- to C-terminus: Phosphatidylinositol-3-phosphatase SAC1-B (586 aa).

The Cytoplasmic portion of the chain corresponds to 1–519 (MASTYNSFNL…TPLHEPKDWK (519 aa)). The 330-residue stretch at 121-450 (LNSVLNTDGF…ANACAKQYAG (330 aa)) folds into the SAC domain. The essential for phosphatidylinositol-4-phosphate phosphatase activity stretch occupies residues 451–586 (TGALKTDFTR…PRLVQKEKMD (136 aa)). Residues 520 to 540 (FLTLPIIMVVAFSMCIICLLM) form a helical membrane-spanning segment. The Lumenal segment spans residues 541–547 (AGDTWTE). The helical transmembrane segment at 548–568 (TLAYVLFWGSASVVTGGVILF) threads the bilayer. Topologically, residues 569–586 (NGRDFVDAPRLVQKEKMD) are cytoplasmic.

It localises to the endoplasmic reticulum membrane. The protein localises to the golgi apparatus membrane. The enzyme catalyses a 1,2-diacyl-sn-glycero-3-phospho-(1D-myo-inositol-3-phosphate) + H2O = a 1,2-diacyl-sn-glycero-3-phospho-(1D-myo-inositol) + phosphate. It catalyses the reaction a 1,2-diacyl-sn-glycero-3-phospho-(1D-myo-inositol 4-phosphate) + H2O = a 1,2-diacyl-sn-glycero-3-phospho-(1D-myo-inositol) + phosphate. Its function is as follows. Phosphoinositide phosphatase which catalyzes the hydrolysis of phosphatidylinositol 4-phosphate (PtdIns(4)P), phosphatidylinositol 3-phosphate (PtdIns(3)P) and has low activity towards phosphatidylinositol-3,5-bisphosphate (PtdIns(3,5)P2). This is Phosphatidylinositol-3-phosphatase SAC1-B (sacm1lb) from Danio rerio (Zebrafish).